The sequence spans 597 residues: Putative lipase ATG15 (597 aa).

Residues 1-15 (MTLEKNRHANKGTSW) lie on the Cytoplasmic side of the membrane. A helical; Signal-anchor for type II membrane protein membrane pass occupies residues 16–36 (TWMIYKFVVGVITVAILVLFI). The Lumenal portion of the chain corresponds to 37–597 (TQKSVSQAQD…DDDEDTFERK (561 aa)). N-linked (GlcNAc...) asparagine glycans are attached at residues asparagine 195, asparagine 262, and asparagine 346. Catalysis depends on serine 364, which acts as the Charge relay system. N-linked (GlcNAc...) asparagine glycosylation is present at asparagine 481. Residues 507 to 570 (EKDEPKLPNP…PTDQDPPKKC (64 aa)) form a disordered region. Over residues 519 to 554 (SSSKSTLSTKTTSLKSSSTYSGSTSSSTVTKTTQTS) the composition is skewed to low complexity.

This sequence belongs to the AB hydrolase superfamily. Lipase family. As to quaternary structure, binds to both phosphatidylinositol (PI) and phosphatidylinositol 3,5-bisphosphate (PIP2).

It is found in the endosome. The protein resides in the multivesicular body membrane. Its subcellular location is the prevacuolar compartment membrane. The enzyme catalyses a triacylglycerol + H2O = a diacylglycerol + a fatty acid + H(+). Lipase which is essential for lysis of subvacuolar cytoplasm to vacuole targeted bodies and intravacuolar autophagic bodies. Involved in the lysis of intravacuolar multivesicular body (MVB) vesicles. The intravacuolar membrane disintegration by ATG15 is critical to life span extension. In Candida albicans (strain SC5314 / ATCC MYA-2876) (Yeast), this protein is Putative lipase ATG15 (ATG15).